The sequence spans 367 residues: tRNA-specific 2-thiouridylase MnmA (367 aa).

Residues Gly12–Ser19 and Met38 contribute to the ATP site. The interaction with target base in tRNA stretch occupies residues Asn98–Asp100. Cys103 acts as the Nucleophile in catalysis. Cys103 and Cys200 form a disulfide bridge. Gly128 serves as a coordination point for ATP. An interaction with tRNA region spans residues Lys150–Gln152. Residue Cys200 is the Cysteine persulfide intermediate of the active site. The tract at residues Arg312–Tyr313 is interaction with tRNA.

This sequence belongs to the MnmA/TRMU family. In terms of assembly, interacts with TusE.

It localises to the cytoplasm. It carries out the reaction S-sulfanyl-L-cysteinyl-[protein] + uridine(34) in tRNA + AH2 + ATP = 2-thiouridine(34) in tRNA + L-cysteinyl-[protein] + A + AMP + diphosphate + H(+). Its function is as follows. Catalyzes the 2-thiolation of uridine at the wobble position (U34) of tRNA(Lys), tRNA(Glu) and tRNA(Gln), leading to the formation of s(2)U34, the first step of tRNA-mnm(5)s(2)U34 synthesis. Sulfur is provided by IscS, via a sulfur-relay system. Binds ATP and its substrate tRNAs. This Photorhabdus laumondii subsp. laumondii (strain DSM 15139 / CIP 105565 / TT01) (Photorhabdus luminescens subsp. laumondii) protein is tRNA-specific 2-thiouridylase MnmA.